Consider the following 686-residue polypeptide: NADH-ubiquinone oxidoreductase chain 5 (686 aa).

Helical transmembrane passes span 3–23 (LIILFLPFVGAFISGFLGRFV), 40–60 (ALLSLYYWLSINELIIGLFSF), 101–121 (ITLPFLFTVLFISFLIHLFSV), 139–159 (LFTFFMAILVTGANYFVLFVG), 160–180 (WEGIGVVSYLLINFWFTRIQA), 198–218 (LSIAYFVMLPAFGSADFSTVF), 222–242 (AYINQTTITIIGFLLLVGAMA), 261–281 (TPVSALIHAATLVTAGSYLLI), 293–313 (VLLVITIIGASTAFFAATCGL), 321–341 (IIAFSTISQLGYMVMAIGLSQ), 350–370 (LFHAYFKALLFLGAGSVIHAF), 382–402 (LINFLPFTYAVMLVGTLSLLA), 432–452 (ILGSVTAGLTAFYSFRLISLV), 472–492 (ITVIIPLAVLAIFSIFFGYVT), 526–546 (LIFKLLPTIFSLAGTLFALYL), 635–655 (ALYITLGLLSLLFIVFAPMLV), and 665–685 (LIILFIFTLIVNSAYLNKKLS).

Belongs to the complex I subunit 5 family.

The protein localises to the mitochondrion inner membrane. The enzyme catalyses a ubiquinone + NADH + 5 H(+)(in) = a ubiquinol + NAD(+) + 4 H(+)(out). Its function is as follows. Core subunit of the mitochondrial membrane respiratory chain NADH dehydrogenase (Complex I) that is believed to belong to the minimal assembly required for catalysis. Complex I functions in the transfer of electrons from NADH to the respiratory chain. The immediate electron acceptor for the enzyme is believed to be ubiquinone. This chain is NADH-ubiquinone oxidoreductase chain 5 (ND5), found in Schizophyllum commune (Split gill fungus).